Reading from the N-terminus, the 258-residue chain is UPF0246 protein YE0603 (258 aa).

Belongs to the UPF0246 family.

The chain is UPF0246 protein YE0603 from Yersinia enterocolitica serotype O:8 / biotype 1B (strain NCTC 13174 / 8081).